The primary structure comprises 360 residues: DNA polymerase IV (360 aa).

One can recognise a UmuC domain in the interval Ile-6–Gly-187. Asp-10 and Asp-105 together coordinate Mg(2+). The active site involves Glu-106.

This sequence belongs to the DNA polymerase type-Y family. Monomer. Requires Mg(2+) as cofactor.

The protein resides in the cytoplasm. The catalysed reaction is DNA(n) + a 2'-deoxyribonucleoside 5'-triphosphate = DNA(n+1) + diphosphate. Functionally, poorly processive, error-prone DNA polymerase involved in untargeted mutagenesis. Copies undamaged DNA at stalled replication forks, which arise in vivo from mismatched or misaligned primer ends. These misaligned primers can be extended by PolIV. Exhibits no 3'-5' exonuclease (proofreading) activity. May be involved in translesional synthesis, in conjunction with the beta clamp from PolIII. The protein is DNA polymerase IV of Exiguobacterium sibiricum (strain DSM 17290 / CCUG 55495 / CIP 109462 / JCM 13490 / 255-15).